A 146-amino-acid polypeptide reads, in one-letter code: MORN repeat-containing protein 4 (146 aa).

MORN repeat units lie at residues 16–38, 39–61, 62–84, and 85–107; these read YRGE…DGGT, YLGH…DGSR, YEGE…DNMT, and FEGE…DGSH.

Interacts with MYO3A. As to expression, retina.

It localises to the cytoplasm. The protein localises to the cell projection. The protein resides in the filopodium tip. Its subcellular location is the stereocilium. In terms of biological role, plays a role in promoting axonal degeneration following neuronal injury by toxic insult or trauma. The polypeptide is MORN repeat-containing protein 4 (MORN4) (Bos taurus (Bovine)).